We begin with the raw amino-acid sequence, 158 residues long: Oocyte-secreted protein 2 (158 aa).

Residues 1–17 (MALEVLMLLAVLIWTGA) form the signal peptide.

Belongs to the PLAC1 family. As to expression, highly expressed in oocytes.

The protein resides in the secreted. Its subcellular location is the cytoplasm. Its function is as follows. Involved in oocyte maturation. The chain is Oocyte-secreted protein 2 (OOSP2) from Homo sapiens (Human).